Here is an 841-residue protein sequence, read N- to C-terminus: Translation initiation factor IF-2 (841 aa).

5 stretches are compositionally biased toward basic and acidic residues: residues 1–12, 50–92, 114–170, 188–202, and 213–235; these read MSDNEIKNEAPK, EAAL…EATK, EQPK…REEA, READ…EANR, and KKGD…DVKG. 2 disordered regions span residues 1-24 and 50-246; these read MSDN…KTTV and EAAL…GSAL. Residues 340-510 enclose the tr-type G domain; it reads TRAPVVTIMG…LLQSEVLELT (171 aa). The tract at residues 349–356 is G1; it reads GHVDHGKT. 349–356 is a GTP binding site; the sequence is GHVDHGKT. Residues 374 to 378 form a G2 region; the sequence is GITQH. Residues 396 to 399 form a G3 region; that stretch reads DTPG. GTP contacts are provided by residues 396–400 and 450–453; these read DTPGH and NKID. Positions 450–453 are G4; sequence NKID. The G5 stretch occupies residues 486-488; sequence SAK.

The protein belongs to the TRAFAC class translation factor GTPase superfamily. Classic translation factor GTPase family. IF-2 subfamily.

The protein localises to the cytoplasm. Its function is as follows. One of the essential components for the initiation of protein synthesis. Protects formylmethionyl-tRNA from spontaneous hydrolysis and promotes its binding to the 30S ribosomal subunits. Also involved in the hydrolysis of GTP during the formation of the 70S ribosomal complex. This Actinobacillus pleuropneumoniae serotype 3 (strain JL03) protein is Translation initiation factor IF-2.